We begin with the raw amino-acid sequence, 247 residues long: tRNA (guanine-N(7)-)-methyltransferase (247 aa).

S-adenosyl-L-methionine is bound by residues G70, 93 to 94 (EI), 128 to 129 (NA), and L148. The active site involves D151. S-adenosyl-L-methionine is bound at residue 226–228 (SEE).

This sequence belongs to the class I-like SAM-binding methyltransferase superfamily. TrmB family.

The protein localises to the nucleus. The catalysed reaction is guanosine(46) in tRNA + S-adenosyl-L-methionine = N(7)-methylguanosine(46) in tRNA + S-adenosyl-L-homocysteine. Its pathway is tRNA modification; N(7)-methylguanine-tRNA biosynthesis. Its function is as follows. Catalyzes the formation of N(7)-methylguanine at position 46 (m7G46) in tRNA. In Drosophila persimilis (Fruit fly), this protein is tRNA (guanine-N(7)-)-methyltransferase.